Here is a 131-residue protein sequence, read N- to C-terminus: uncharacterized protein (131 aa).

2 helical membrane-spanning segments follow: residues 52–72 (LIMIGIIELSYFISLGGFYLV) and 97–117 (SDIISIFCSIAFVLFCIYDVG).

The protein resides in the membrane. This is an uncharacterized protein from Acanthamoeba polyphaga mimivirus (APMV).